The chain runs to 45 residues: uncharacterized protein (45 aa).

A helical membrane pass occupies residues 10–27; sequence LLYFVLFVDIYGIFTNNI.

The protein localises to the membrane. This is an uncharacterized protein from Dictyostelium discoideum (Social amoeba).